The following is a 306-amino-acid chain: Porphobilinogen deaminase (306 aa).

Position 239 is an S-(dipyrrolylmethanemethyl)cysteine (Cys239).

The protein belongs to the HMBS family. In terms of assembly, monomer. Dipyrromethane is required as a cofactor.

The catalysed reaction is 4 porphobilinogen + H2O = hydroxymethylbilane + 4 NH4(+). It participates in porphyrin-containing compound metabolism; protoporphyrin-IX biosynthesis; coproporphyrinogen-III from 5-aminolevulinate: step 2/4. Its function is as follows. Tetrapolymerization of the monopyrrole PBG into the hydroxymethylbilane pre-uroporphyrinogen in several discrete steps. This is Porphobilinogen deaminase from Helicobacter acinonychis (strain Sheeba).